Consider the following 151-residue polypeptide: Large ribosomal subunit protein bL9 (151 aa).

This sequence belongs to the bacterial ribosomal protein bL9 family.

Its function is as follows. Binds to the 23S rRNA. The polypeptide is Large ribosomal subunit protein bL9 (Chlorobium limicola (strain DSM 245 / NBRC 103803 / 6330)).